The sequence spans 471 residues: Adenosylhomocysteinase (471 aa).

3 residues coordinate substrate: T60, D135, and E196. Residue 197–199 (TTT) coordinates NAD(+). Substrate-binding residues include K226 and D230. Residues N231, 260 to 265 (GYGDVG), E283, N318, 339 to 341 (IGH), and N387 each bind NAD(+).

It belongs to the adenosylhomocysteinase family. The cofactor is NAD(+).

The protein localises to the cytoplasm. It catalyses the reaction S-adenosyl-L-homocysteine + H2O = L-homocysteine + adenosine. It functions in the pathway amino-acid biosynthesis; L-homocysteine biosynthesis; L-homocysteine from S-adenosyl-L-homocysteine: step 1/1. In terms of biological role, may play a key role in the regulation of the intracellular concentration of adenosylhomocysteine. This chain is Adenosylhomocysteinase, found in Chlorobium phaeovibrioides (strain DSM 265 / 1930) (Prosthecochloris vibrioformis (strain DSM 265)).